Consider the following 202-residue polypeptide: Nigerythrin (202 aa).

A Ferritin-like diiron domain is found at 23–168; that stretch reads KTAVGSTLEN…AYNDIDAPDD (146 aa). Fe cation contacts are provided by glutamate 40, glutamate 73, glutamate 115, glutamate 118, glutamate 149, histidine 152, cysteine 174, cysteine 177, cysteine 189, and cysteine 192. Residues 169–202 form the Rubredoxin-like domain; that stretch reads DKFHLCPICGYIHKGEDFEKCPICFRPKDTFTAY.

As to quaternary structure, homodimer. May possess two rubredoxin-like centers and two hemerythrin-like binuclear-iron centers per dimer.

The protein resides in the cytoplasm. Functionally, exhibits NADH peroxidase activity (in vitro). This chain is Nigerythrin (ngr), found in Nitratidesulfovibrio vulgaris (strain ATCC 29579 / DSM 644 / CCUG 34227 / NCIMB 8303 / VKM B-1760 / Hildenborough) (Desulfovibrio vulgaris).